The chain runs to 339 residues: Methionyl-tRNA formyltransferase (339 aa).

(6S)-5,6,7,8-tetrahydrofolate is bound at residue 110 to 113; that stretch reads SLLP.

The protein belongs to the Fmt family.

The catalysed reaction is L-methionyl-tRNA(fMet) + (6R)-10-formyltetrahydrofolate = N-formyl-L-methionyl-tRNA(fMet) + (6S)-5,6,7,8-tetrahydrofolate + H(+). In terms of biological role, attaches a formyl group to the free amino group of methionyl-tRNA(fMet). The formyl group appears to play a dual role in the initiator identity of N-formylmethionyl-tRNA by promoting its recognition by IF2 and preventing the misappropriation of this tRNA by the elongation apparatus. In Prochlorococcus marinus (strain MIT 9211), this protein is Methionyl-tRNA formyltransferase.